The primary structure comprises 324 residues: Probable non-intrinsic ABC protein 5 (324 aa).

The 110-residue stretch at 2–111 folds into the ABC transporter domain; the sequence is DRERYDKVIE…ADLTLVMKDG (110 aa). Transmembrane regions (helical) follow at residues 212 to 232 and 259 to 279; these read YITL…QILF and LSTL…CILV. An ABC transmembrane type-1 domain is found at 222 to 324; it reads VPFILLGQIL…TCSKTCIYSS (103 aa).

The protein belongs to the ABC transporter superfamily.

It is found in the membrane. The polypeptide is Probable non-intrinsic ABC protein 5 (NAP5) (Arabidopsis thaliana (Mouse-ear cress)).